The chain runs to 1387 residues: Regulator of G-protein signaling 12 (1387 aa).

In terms of domain architecture, PDZ spans 21 to 97 (SVEVARGRAG…GVLRMVISEG (77 aa)). A phosphoserine mark is found at S171 and S194. K195 participates in a covalent cross-link: Glycyl lysine isopeptide (Lys-Gly) (interchain with G-Cter in SUMO2). Positions 227–339 (VAMVVGYLGS…GALRTSCHVF (113 aa)) constitute a PID domain. 2 disordered regions span residues 409–428 (ADAH…IGNF) and 442–488 (LGGG…PLET). Over residues 412 to 428 (HQNNSTSSNSDSGIGNF) the composition is skewed to polar residues. R524 and R633 each carry omega-N-methylarginine. The disordered stretch occupies residues 620–650 (RKTKEDKKSSKLGRGVALAQTSQRTSARRSF). 2 positions are modified to phosphoserine: S661 and S671. Residues 715–832 (SFERLLQDPV…LKSQLYQECV (118 aa)) form the RGS domain. The interval 842 to 934 (PDSQQVPSSP…ANGGLCRRES (93 aa)) is disordered. The span at 849 to 869 (SSPASKHSISSDHSNVSTPKK) shows a compositional bias: low complexity. Residues S850 and S879 each carry the phosphoserine modification. A compositionally biased stretch (basic and acidic residues) spans 914–923 (DHGDHAHDAL). S943 bears the Phosphoserine mark. 2 RBD domains span residues 962 to 1032 (KHCC…LGKR) and 1034 to 1104 (LFRL…LEER). Residues 1103 to 1117 (ERDPSRGKVSTEKQK) are compositionally biased toward basic and acidic residues. The interval 1103 to 1168 (ERDPSRGKVS…ARDPRLSKRE (66 aa)) is disordered. Residues 1122-1133 (KQSSAVNSSPRN) show a composition bias toward polar residues. Residues 1151–1168 (IRGENGKSARDPRLSKRE) show a composition bias toward basic and acidic residues. The region spanning 1187–1209 (AEEFFELISKAQSNRADDQRGLL) is the GoLoco domain. 2 disordered regions span residues 1224–1325 (PGSS…EGTT) and 1349–1387 (ADLT…TSRF). Residues 1261-1280 (SDSPATSPASAQSPCSAYSP) are compositionally biased toward low complexity. Residues 1315-1325 (SCISTVQEGTT) show a composition bias toward polar residues. Positions 1367-1380 (LPPPPLPQDTPGPT) are enriched in pro residues.

As to quaternary structure, interacts with GNAI1, GNAI2 and GNAI3; the interactions are GDP-dependent. Detected in brain cortex GABAergic neurons, in striatum and substantia nigra, and in the Purkinje cell layer in the cerebellum and hippocampus (at protein level). Expressed at high levels in brain and lung and lower levels in testis, heart, and spleen.

Its subcellular location is the nucleus. It is found in the cytoplasm. The protein resides in the cell projection. It localises to the dendrite. The protein localises to the synapse. Its function is as follows. Regulates G protein-coupled receptor signaling cascades. Inhibits signal transduction by increasing the GTPase activity of G protein alpha subunits, thereby driving them into their inactive GDP-bound form. The chain is Regulator of G-protein signaling 12 (Rgs12) from Rattus norvegicus (Rat).